Reading from the N-terminus, the 390-residue chain is GTPase Obg (390 aa).

The Obg domain occupies 1–159 (MKFVDEASIL…RDLLLELMLL (159 aa)). The segment at 127 to 147 (NTRFKSSVNRTPRQKTNGTPG) is disordered. Residues 129 to 145 (RFKSSVNRTPRQKTNGT) show a composition bias toward polar residues. Residues 160-333 (ADVGMLGMPN…LCWDVMTFII (174 aa)) enclose the OBG-type G domain. Residues 166–173 (GMPNAGKS), 191–195 (FTTLV), 213–216 (DIPG), 283–286 (NKID), and 314–316 (SAA) each bind GTP. Ser173 and Thr193 together coordinate Mg(2+).

The protein belongs to the TRAFAC class OBG-HflX-like GTPase superfamily. OBG GTPase family. Monomer. Mg(2+) is required as a cofactor.

It is found in the cytoplasm. An essential GTPase which binds GTP, GDP and possibly (p)ppGpp with moderate affinity, with high nucleotide exchange rates and a fairly low GTP hydrolysis rate. Plays a role in control of the cell cycle, stress response, ribosome biogenesis and in those bacteria that undergo differentiation, in morphogenesis control. The polypeptide is GTPase Obg (Salmonella gallinarum (strain 287/91 / NCTC 13346)).